The sequence spans 296 residues: Zinc finger protein 75A (296 aa).

In terms of domain architecture, KRAB spans 1-66 (MYFSQEEWEL…VSPEFKDSAG (66 aa)). 5 C2H2-type zinc fingers span residues 161–183 (FKCQECGKTFRVSSDLIKHQRIH), 189–211 (YKCQQCDKRFRWSSDLNKHLTTH), 217–239 (YKCSWCGKSFSQNTNLHTHQRTH), 245–267 (FTCHECGKKFSQNSHLIKHRRTH), and 273–295 (YTCSICRRNFSRRSSLLRHQKLH).

The protein belongs to the krueppel C2H2-type zinc-finger protein family.

The protein localises to the nucleus. Its function is as follows. May be involved in transcriptional regulation. This is Zinc finger protein 75A (ZNF75A) from Homo sapiens (Human).